We begin with the raw amino-acid sequence, 307 residues long: Agmatinase (307 aa).

Mn(2+) is bound by residues H128, D151, H153, D155, D232, and D234.

The protein belongs to the arginase family. Agmatinase subfamily. It depends on Mn(2+) as a cofactor.

The catalysed reaction is agmatine + H2O = urea + putrescine. It functions in the pathway amine and polyamine biosynthesis; putrescine biosynthesis via agmatine pathway; putrescine from agmatine: step 1/1. Functionally, catalyzes the formation of putrescine from agmatine. This is Agmatinase from Neisseria meningitidis serogroup A / serotype 4A (strain DSM 15465 / Z2491).